We begin with the raw amino-acid sequence, 345 residues long: NADH-quinone oxidoreductase subunit H (345 aa).

8 helical membrane passes run 13–33, 84–104, 115–135, 161–181, 190–210, 248–268, 277–297, and 309–329; these read VLIL…LLFL, FMLA…VIPF, VAIL…IMGG, LGLI…GGIV, FFSW…ISCL, YIAI…GWLS, VFWM…VKAI, and LGWK…AFAA.

It belongs to the complex I subunit 1 family. NDH-1 is composed of 14 different subunits. Subunits NuoA, H, J, K, L, M, N constitute the membrane sector of the complex.

It is found in the cell inner membrane. The enzyme catalyses a quinone + NADH + 5 H(+)(in) = a quinol + NAD(+) + 4 H(+)(out). Functionally, NDH-1 shuttles electrons from NADH, via FMN and iron-sulfur (Fe-S) centers, to quinones in the respiratory chain. The immediate electron acceptor for the enzyme in this species is believed to be ubiquinone. Couples the redox reaction to proton translocation (for every two electrons transferred, four hydrogen ions are translocated across the cytoplasmic membrane), and thus conserves the redox energy in a proton gradient. This subunit may bind ubiquinone. This chain is NADH-quinone oxidoreductase subunit H, found in Roseobacter denitrificans (strain ATCC 33942 / OCh 114) (Erythrobacter sp. (strain OCh 114)).